Here is a 432-residue protein sequence, read N- to C-terminus: Adenylosuccinate synthetase (432 aa).

GTP is bound by residues 13–19 (GDEGKGK) and 41–43 (GHT). D14 serves as the catalytic Proton acceptor. D14 and G41 together coordinate Mg(2+). IMP is bound by residues 14 to 17 (DEGK), 39 to 42 (NAGH), T130, R144, Q225, T240, and R304. Catalysis depends on H42, which acts as the Proton donor. Residue 300–306 (ATTGRKR) participates in substrate binding. GTP contacts are provided by residues R306, 332–334 (KLD), and 414–416 (STG).

It belongs to the adenylosuccinate synthetase family. Homodimer. It depends on Mg(2+) as a cofactor.

The protein resides in the cytoplasm. It carries out the reaction IMP + L-aspartate + GTP = N(6)-(1,2-dicarboxyethyl)-AMP + GDP + phosphate + 2 H(+). It functions in the pathway purine metabolism; AMP biosynthesis via de novo pathway; AMP from IMP: step 1/2. Plays an important role in the de novo pathway of purine nucleotide biosynthesis. Catalyzes the first committed step in the biosynthesis of AMP from IMP. The sequence is that of Adenylosuccinate synthetase from Alkalilimnicola ehrlichii (strain ATCC BAA-1101 / DSM 17681 / MLHE-1).